Reading from the N-terminus, the 377-residue chain is Carboxynorspermidine/carboxyspermidine decarboxylase (377 aa).

N6-(pyridoxal phosphate)lysine is present on K41. E238 and D274 together coordinate substrate.

Belongs to the Orn/Lys/Arg decarboxylase class-II family. NspC subfamily. As to quaternary structure, homodimer. Pyridoxal 5'-phosphate serves as cofactor.

The protein resides in the cytoplasm. The catalysed reaction is carboxynorspermidine + H(+) = norspermidine + CO2. It carries out the reaction carboxyspermidine + H(+) = spermidine + CO2. Functionally, catalyzes the decarboxylation of carboxynorspermidine and carboxyspermidine. Carboxynorspermidine is decarboxylated 20-fold more efficiently than carboxyspermidine. Exhibits some activity with L-ornithine, but shows no activity with L-arginine, L-lysine or meso-diaminopimelate. The sequence is that of Carboxynorspermidine/carboxyspermidine decarboxylase from Vibrio vulnificus (strain CMCP6).